Here is a 174-residue protein sequence, read N- to C-terminus: von Hippel-Lindau tumor suppressor homolog (174 aa).

The protein belongs to the VHL family. As to quaternary structure, interacts with hif-1 (hydroxylated on 'Pro-621'); the interaction induces hif-1 degradation. May be a component of the cullin E3 ubiquitin ligase complex.

It functions in the pathway protein modification; protein ubiquitination. Its function is as follows. Involved in the response to variation in environmental oxygen levels by targeting the hypoxia-inducible transcription factor hif-1 for proteasomal degradation when oxygen levels are normal (around 20%). By regulating hif-1 expression, plays a role in iron homeostasis, aging, heat acclimation and progeny size. Mediates resistance to enteropathogenic E.coli. Mediates susceptibility to B.thuringiensis pore-forming toxins. Not involved in P.aeruginosa susceptibility. This is von Hippel-Lindau tumor suppressor homolog from Caenorhabditis elegans.